A 356-amino-acid polypeptide reads, in one-letter code: S-adenosylmethionine:tRNA ribosyltransferase-isomerase (356 aa).

Belongs to the QueA family. Monomer.

The protein resides in the cytoplasm. The catalysed reaction is 7-aminomethyl-7-carbaguanosine(34) in tRNA + S-adenosyl-L-methionine = epoxyqueuosine(34) in tRNA + adenine + L-methionine + 2 H(+). Its pathway is tRNA modification; tRNA-queuosine biosynthesis. Transfers and isomerizes the ribose moiety from AdoMet to the 7-aminomethyl group of 7-deazaguanine (preQ1-tRNA) to give epoxyqueuosine (oQ-tRNA). The sequence is that of S-adenosylmethionine:tRNA ribosyltransferase-isomerase from Escherichia coli (strain ATCC 8739 / DSM 1576 / NBRC 3972 / NCIMB 8545 / WDCM 00012 / Crooks).